The chain runs to 322 residues: Malate dehydrogenase (322 aa).

NAD(+) contacts are provided by residues 10-15 and D34; that span reads GSGQIG. 2 residues coordinate substrate: R83 and R89. Residues N96 and 119–121 contribute to the NAD(+) site; that span reads ITN. N121 and R152 together coordinate substrate. Residue H176 is the Proton acceptor of the active site.

The protein belongs to the LDH/MDH superfamily. MDH type 3 family.

It carries out the reaction (S)-malate + NAD(+) = oxaloacetate + NADH + H(+). Functionally, catalyzes the reversible oxidation of malate to oxaloacetate. This chain is Malate dehydrogenase, found in Bradyrhizobium diazoefficiens (strain JCM 10833 / BCRC 13528 / IAM 13628 / NBRC 14792 / USDA 110).